A 424-amino-acid chain; its full sequence is UDP-N-acetylglucosamine 1-carboxyvinyltransferase (424 aa).

Lysine 22 to asparagine 23 is a binding site for phosphoenolpyruvate. Arginine 93 lines the UDP-N-acetyl-alpha-D-glucosamine pocket. Cysteine 117 (proton donor) is an active-site residue. The residue at position 117 (cysteine 117) is a 2-(S-cysteinyl)pyruvic acid O-phosphothioketal. UDP-N-acetyl-alpha-D-glucosamine is bound by residues lysine 162–valine 165, aspartate 307, and isoleucine 329.

It belongs to the EPSP synthase family. MurA subfamily.

The protein localises to the cytoplasm. It catalyses the reaction phosphoenolpyruvate + UDP-N-acetyl-alpha-D-glucosamine = UDP-N-acetyl-3-O-(1-carboxyvinyl)-alpha-D-glucosamine + phosphate. It functions in the pathway cell wall biogenesis; peptidoglycan biosynthesis. Its function is as follows. Cell wall formation. Adds enolpyruvyl to UDP-N-acetylglucosamine. The protein is UDP-N-acetylglucosamine 1-carboxyvinyltransferase of Actinobacillus pleuropneumoniae serotype 3 (strain JL03).